Consider the following 602-residue polypeptide: Basic-leucine zipper transcription factor B (602 aa).

Residues 1–10 are compositionally biased toward polar residues; sequence MNQFYQSTTG. Positions 1-128 are disordered; that stretch reads MNQFYQSTTG…NRVNQNLASR (128 aa). Composition is skewed to low complexity over residues 11–54 and 66–102; these read GQQN…TSTS and QQQI…YNGD. A coiled-coil region spans residues 58–94; that stretch reads KNKDNQSKQQQIQQQQIQQQQQQQQQQQQQIQQQSVD. Positions 113–176 constitute a bZIP domain; the sequence is ENKKNRNRVN…GVEIMKPDPA (64 aa). Residues 115–135 form a basic motif region; the sequence is KKNRNRVNQNLASRNYRQRKK. The tract at residues 138 to 145 is leucine-zipper; sequence IKEIEEKL. 2 disordered regions span residues 328–401 and 525–602; these read TNLS…QNNN and QNQT…PSRQ. Low complexity-rich tracts occupy residues 336–350, 358–401, and 525–592; these read PNPT…TQST, LTLL…QNNN, and QNQT…SSPY. Positions 509-552 form a coiled coil; sequence TFSQQTQQLQQAQLQLQNQTKQQQQQLQNNNNNNNNNNNNNNSF. Residues 593–602 show a composition bias toward polar residues; sequence NHHQQQPSRQ.

It belongs to the bZIP family. As to quaternary structure, binds DNA as a dimer. Heterodimerizes with dimA; in vitro. Also able to form homodimer; in vitro.

It is found in the nucleus. In terms of biological role, transcriptional regulator involved in DIF-1 signaling. DIF-1 (Differentiation Inducing Factor-1) is a signal molecule involved in the differentiation of pstO (prestalk-O) cells. May be a direct activator of ecmA. This is Basic-leucine zipper transcription factor B (dimB) from Dictyostelium discoideum (Social amoeba).